Consider the following 287-residue polypeptide: Membrane protein insertase YidC 2 (287 aa).

The signal sequence occupies residues 1 to 26 (MKKKKRFKQKLLIASLVIGLMAVLSG). Cys-27 is lipidated: N-palmitoyl cysteine. Cys-27 is lipidated: S-diacylglycerol cysteine. A run of 5 helical transmembrane segments spans residues 65 to 85 (YAVG…PLMI), 135 to 155 (MMGC…YQAI), 178 to 198 (YILP…SMMG), 207 to 224 (AMIV…GITL), and 228 to 250 (LALY…NNPF).

Belongs to the OXA1/ALB3/YidC family. Type 2 subfamily.

Its subcellular location is the cell membrane. In terms of biological role, required for the insertion and/or proper folding and/or complex formation of integral membrane proteins into the membrane. Involved in integration of membrane proteins that insert both dependently and independently of the Sec translocase complex, as well as at least some lipoproteins. The polypeptide is Membrane protein insertase YidC 2 (Listeria monocytogenes serovar 1/2a (strain ATCC BAA-679 / EGD-e)).